The primary structure comprises 246 residues: Ribonuclease PH (246 aa).

Phosphate contacts are provided by residues R91 and G129–R131.

The protein belongs to the RNase PH family. In terms of assembly, homohexameric ring arranged as a trimer of dimers.

The enzyme catalyses tRNA(n+1) + phosphate = tRNA(n) + a ribonucleoside 5'-diphosphate. In terms of biological role, phosphorolytic 3'-5' exoribonuclease that plays an important role in tRNA 3'-end maturation. Removes nucleotide residues following the 3'-CCA terminus of tRNAs; can also add nucleotides to the ends of RNA molecules by using nucleoside diphosphates as substrates, but this may not be physiologically important. Probably plays a role in initiation of 16S rRNA degradation (leading to ribosome degradation) during starvation. The protein is Ribonuclease PH of Burkholderia cenocepacia (strain ATCC BAA-245 / DSM 16553 / LMG 16656 / NCTC 13227 / J2315 / CF5610) (Burkholderia cepacia (strain J2315)).